The primary structure comprises 357 residues: 3-isopropylmalate dehydrogenase (357 aa).

NAD(+) is bound at residue 76–89 (GPQWDTIDPALRPE). Substrate is bound by residues arginine 96, arginine 106, arginine 134, and aspartate 224. 3 residues coordinate Mg(2+): aspartate 224, aspartate 248, and aspartate 252. 282–294 (GSAPDIAGKGIAN) provides a ligand contact to NAD(+).

It belongs to the isocitrate and isopropylmalate dehydrogenases family. LeuB type 1 subfamily. Homodimer. Requires Mg(2+) as cofactor. Mn(2+) serves as cofactor.

The protein resides in the cytoplasm. The catalysed reaction is (2R,3S)-3-isopropylmalate + NAD(+) = 4-methyl-2-oxopentanoate + CO2 + NADH. Its pathway is amino-acid biosynthesis; L-leucine biosynthesis; L-leucine from 3-methyl-2-oxobutanoate: step 3/4. Its function is as follows. Catalyzes the oxidation of 3-carboxy-2-hydroxy-4-methylpentanoate (3-isopropylmalate) to 3-carboxy-4-methyl-2-oxopentanoate. The product decarboxylates to 4-methyl-2 oxopentanoate. This is 3-isopropylmalate dehydrogenase from Xanthomonas axonopodis pv. citri (strain 306).